The following is a 479-amino-acid chain: Odorant receptor coreceptor (479 aa).

Residues 1 to 43 (MHVQPTKYHGLVLDLMPNIRLMQGFGHFLFRYVSGPVLIRKLY) lie on the Cytoplasmic side of the membrane. The chain crosses the membrane as a helical span at residues 44–64 (SWWNLIMILLQYFAIMGNLVM). The Extracellular portion of the chain corresponds to 65–73 (NTGDVNELT). The helical transmembrane segment at 74–94 (ANTITTLFFTHSVTKFIYVAV) threads the bilayer. Over 95–133 (NSEHFYRTLGIWNQPNSHSLFAESDARYHSIALAKMRKL) the chain is Cytoplasmic. Residues 134–154 (LVMVMVTTVLSVVAWITITFF) form a helical membrane-spanning segment. The Extracellular segment spans residues 155-187 (GDSVKNVFDKETNETYTVEIPRLPIKALYPWDA). N-linked (GlcNAc...) asparagine glycosylation is present at asparagine 167. A helical transmembrane segment spans residues 188 to 208 (MSGVPYFFSFVYQAYFLLFSM). Over 209 to 344 (CQANLADVMF…VERHKHVVRL (136 aa)) the chain is Cytoplasmic. Residues 345–365 (VSAIGETYGAALLLHMLTSTI) traverse the membrane as a helical segment. The Extracellular portion of the chain corresponds to 366–383 (KLTLLAYQATKIDALNVY). Residues 384 to 404 (GLTVIGYLVYALAQVFLFCIF) form a helical membrane-spanning segment. Over 405-455 (GNRLIEESSSVMEAAYSCHWYDGSEEAKTFVQIVCQQCQKAMTISGAKFFT) the chain is Cytoplasmic. Residues 456–476 (VSLDLFASVLGAVVTYFMVLV) traverse the membrane as a helical segment. Topologically, residues 477–479 (QLK) are extracellular.

Belongs to the insect chemoreceptor superfamily. Heteromeric odorant receptor channel (TC 1.A.69) family. Orco subfamily. In terms of assembly, heterodimer with conventional odorant receptors (ORs). As to expression, expressed in female antenna, maxillary palp and proboscis. Not detected in male tissues.

The protein resides in the cell membrane. Its function is as follows. Odorant coreceptor which complexes with conventional odorant receptors (ORs) to form odorant-sensing units, providing sensitive and prolonged odorant signaling and calcium permeability. Orco is a universal and integral part of the functional odorant receptor, involved in the dendritic localization of other olfactory receptors. Required for detecting a host for blood feeding. Plays a key role in preferred attraction of females for humans over non-human hosts for blood feeding. The sequence is that of Odorant receptor coreceptor from Aedes albopictus (Asian tiger mosquito).